The following is a 360-amino-acid chain: UDP-N-acetylglucosamine--N-acetylmuramyl-(pentapeptide) pyrophosphoryl-undecaprenol N-acetylglucosamine transferase (360 aa).

Residues 12-14, Asn-124, Arg-161, Ser-189, Ile-243, and Gln-288 contribute to the UDP-N-acetyl-alpha-D-glucosamine site; that span reads TGG.

The protein belongs to the glycosyltransferase 28 family. MurG subfamily.

Its subcellular location is the cell inner membrane. The enzyme catalyses di-trans,octa-cis-undecaprenyl diphospho-N-acetyl-alpha-D-muramoyl-L-alanyl-D-glutamyl-meso-2,6-diaminopimeloyl-D-alanyl-D-alanine + UDP-N-acetyl-alpha-D-glucosamine = di-trans,octa-cis-undecaprenyl diphospho-[N-acetyl-alpha-D-glucosaminyl-(1-&gt;4)]-N-acetyl-alpha-D-muramoyl-L-alanyl-D-glutamyl-meso-2,6-diaminopimeloyl-D-alanyl-D-alanine + UDP + H(+). The protein operates within cell wall biogenesis; peptidoglycan biosynthesis. Functionally, cell wall formation. Catalyzes the transfer of a GlcNAc subunit on undecaprenyl-pyrophosphoryl-MurNAc-pentapeptide (lipid intermediate I) to form undecaprenyl-pyrophosphoryl-MurNAc-(pentapeptide)GlcNAc (lipid intermediate II). The chain is UDP-N-acetylglucosamine--N-acetylmuramyl-(pentapeptide) pyrophosphoryl-undecaprenol N-acetylglucosamine transferase from Acidithiobacillus ferrooxidans (strain ATCC 23270 / DSM 14882 / CIP 104768 / NCIMB 8455) (Ferrobacillus ferrooxidans (strain ATCC 23270)).